Here is a 60-residue protein sequence, read N- to C-terminus: Insect toxin mu-NPTX-Nc1a (60 aa).

The N-terminal stretch at 1–19 is a signal peptide; it reads MIYQVVLLLLVSPAPVSAA.

Post-translationally, contains 4 disulfide bonds. In terms of tissue distribution, expressed by the venom gland.

The protein localises to the secreted. Its function is as follows. Insect-specific toxin. Blocks voltage-gated potassium and sodium channels. The chain is Insect toxin mu-NPTX-Nc1a from Trichonephila clavata (Joro spider).